The sequence spans 233 residues: Large ribosomal subunit protein mL67 (233 aa).

Residues 214-233 (RQQAQQSEQQSQSELESQTA) are disordered. A compositionally biased stretch (low complexity) spans 215-233 (QQAQQSEQQSQSELESQTA).

Belongs to the mitochondrion-specific ribosomal protein mL67 family.

Its subcellular location is the nucleus. The protein localises to the mitochondrion. Functionally, transcription factor involved in regulation of RNA polymerase II-dependent transcription. Also involved in regulation of mitochondrial DNA recombination, maintenance and repair, and generation of homoplasmic cells. The chain is Large ribosomal subunit protein mL67 (MHR1) from Debaryomyces hansenii (strain ATCC 36239 / CBS 767 / BCRC 21394 / JCM 1990 / NBRC 0083 / IGC 2968) (Yeast).